The sequence spans 172 residues: Ribosome maturation factor RimM (172 aa).

The region spanning 98-171 (PGEYYYHQIV…KVIVELMEGL (74 aa)) is the PRC barrel domain.

This sequence belongs to the RimM family. As to quaternary structure, binds ribosomal protein uS19.

The protein resides in the cytoplasm. Its function is as follows. An accessory protein needed during the final step in the assembly of 30S ribosomal subunit, possibly for assembly of the head region. Essential for efficient processing of 16S rRNA. May be needed both before and after RbfA during the maturation of 16S rRNA. It has affinity for free ribosomal 30S subunits but not for 70S ribosomes. In Levilactobacillus brevis (strain ATCC 367 / BCRC 12310 / CIP 105137 / JCM 1170 / LMG 11437 / NCIMB 947 / NCTC 947) (Lactobacillus brevis), this protein is Ribosome maturation factor RimM.